A 124-amino-acid chain; its full sequence is Class I hydrophobin 1 (124 aa).

The N-terminal stretch at 1–18 is a signal peptide; it reads MRFSIATVVLSLAAMVVA. Intrachain disulfides connect Cys35–Cys85, Cys43–Cys79, Cys44–Cys63, and Cys86–Cys97.

The protein belongs to the fungal hydrophobin family.

The protein localises to the secreted. The protein resides in the cell wall. Aerial growth, conidiation, and dispersal of filamentous fungi in the environment rely upon a capability of their secreting small amphipathic proteins called hydrophobins (HPBs) with low sequence identity. Class I can self-assemble into an outermost layer of rodlet bundles on aerial cell surfaces, conferring cellular hydrophobicity that supports fungal growth, development and dispersal; whereas Class II form highly ordered films at water-air interfaces through intermolecular interactions but contribute nothing to the rodlet structure. In Botryotinia fuckeliana, hydrophobins are not involved in conferring surface hydrophobicity to conidia and aerial hyphae and their function in sclerotia and fruiting bodies remains to be investigated. The protein is Class I hydrophobin 1 (Bhp1) of Botryotinia fuckeliana (strain B05.10) (Noble rot fungus).